We begin with the raw amino-acid sequence, 2813 residues long: A-kinase anchor protein 13 (2813 aa).

2 disordered regions span residues 304-400 (AQDP…QDSC) and 415-439 (LSSC…QESL). A compositionally biased stretch (polar residues) spans 427 to 439 (TKSSGMPTDQESL). The tract at residues 494–516 (WKNVLQGGESTKERFENSNIGTA) is important for interaction with PRKAR2A. Disordered stretches follow at residues 539 to 585 (AASS…VDQN), 632 to 653 (HQNS…SPIC), and 690 to 726 (SEST…RDTQ). Over residues 561-577 (STEKTAETETSRSREES) the composition is skewed to basic and acidic residues. Polar residues predominate over residues 690–702 (SESTTARQPSSQD). A Phosphoserine modification is found at serine 790. 2 disordered regions span residues 805-856 (VPSQ…AAEL) and 939-965 (ENAL…QFHE). At threonine 815 the chain carries Phosphothreonine. Residues 835–844 (PDTRPLEDRA) show a composition bias toward basic and acidic residues. 2 stretches are compositionally biased toward polar residues: residues 847-856 (LSTSSTAAEL) and 939-948 (ENALSSGTLQ). Phosphothreonine is present on threonine 953. Serine 983 is modified (phosphoserine). Disordered regions lie at residues 1431–1455 (GVLK…DSII) and 1467–1542 (DITG…DSIT). The segment covering 1467 to 1478 (DITGSSSSTDDT) has biased composition (low complexity). Polar residues predominate over residues 1488–1497 (GSDVSLSQIL). Residues serine 1489, serine 1507, serine 1540, serine 1565, and serine 1602 each carry the phosphoserine modification. Over residues 1525-1540 (SEPADPGDVEEEEMDS) the composition is skewed to acidic residues. The tract at residues 1585 to 1715 (RVLGDVVRRP…HSTFHNTSAN (131 aa)) is important for interaction with MAP2K3. The segment at 1601–1638 (FSLEGLTGGAGVGNKPSSSLEVSSANAEELRHPFSGEE) is disordered. Residues 1615–1626 (KPSSSLEVSSAN) are compositionally biased toward polar residues. The segment covering 1628 to 1638 (EELRHPFSGEE) has biased composition (basic and acidic residues). Residues serine 1642, serine 1645, and serine 1647 each carry the phosphoserine modification. An N6-methyllysine modification is found at lysine 1670. The interval 1755 to 1793 (KMSSSKKSKEKEKEKDKIKEKEKDSKDKEKDKKTVNGHT) is disordered. Residues 1758-1790 (SSKKSKEKEKEKDKIKEKEKDSKDKEKDKKTVN) are a coiled coil. Residues 1761–1788 (KSKEKEKEKDKIKEKEKDSKDKEKDKKT) show a composition bias toward basic and acidic residues. A Phorbol-ester/DAG-type zinc finger spans residues 1791 to 1838 (GHTFSSIPVVGPISCSQCMKPFTNKDAYTCANCSAFVHKGCRESLASC). Phosphoserine is present on residues serine 1876, serine 1895, and serine 1929. Positions 1919–2813 (MSNTWKFLSH…VSAEGEEIFC (895 aa)) are interaction with ESR1. Position 1930 is a phosphothreonine (threonine 1930). A phosphoserine mark is found at serine 1932 and serine 1945. In terms of domain architecture, DH spans 1994–2191 (KRQEVIYELM…KDVIGAVDSK (198 aa)). The PH domain occupies 2231–2333 (KLVRDGSVFL…WIQIIQDTIN (103 aa)). Serine 2345 and serine 2398 each carry phosphoserine. Residues 2345 to 2381 (SENEEEKKMLDTRARELKEQLHQKDQKILLLLEEKEM) are a coiled coil. Residues 2466–2502 (ETFGGFDSHQMNASKGGEKEEGDDGQDLRRTESDSGL) form a disordered region. Threonine 2467 is modified (phosphothreonine). Serine 2473 bears the Phosphoserine mark. Residues 2491-2502 (QDLRRTESDSGL) are compositionally biased toward basic and acidic residues. Serine 2563 and serine 2566 each carry phosphoserine. Residues 2568-2683 (LIEQEKQRSL…RLSQRQTERD (116 aa)) adopt a coiled-coil conformation. A compositionally biased stretch (basic and acidic residues) spans 2665–2684 (QEQLRREAERLSQRQTERDL). The segment at 2665–2813 (QEQLRREAER…VSAEGEEIFC (149 aa)) is disordered. Phosphoserine occurs at positions 2703, 2709, and 2728. The segment covering 2720–2735 (SLDSELSVSPKRNSIS) has biased composition (polar residues). Positions 2760 to 2771 (QSQAPASTSAST) are enriched in low complexity.

Interacts with the cAMP-dependent protein kinase (PKA) holoenzyme and with the regulatory subunit PRKAR2A. Interacts with RHOA. Also interacts with RHOB and RHOC. Identified in a ternary complex with RHOA and PRKAR2A. Identified in a complex with NR3C1 and RHOA. Interacts with BRAF and KSR1. Identified in a complex with BRAF and KSR1. Component of a signaling complex containing at least AKAP13, PKN1, MAPK14, ZAK and MAP2K3. Within this complex, AKAP13 interacts directly with PKN1, which in turn recruits MAPK14, MAP2K3 and ZAK. Interacts (phosphorylated form) with YWHAB and YWHAZ. Interaction with YWHAB inhibits activation of RHOA, interferes with PKN1 binding and activation of MAP kinases. Interacts with GNA12. Interacts with IKBKB. Interacts with ESR1, THRA, PPARA and NME2. Interacts (via the C-terminal domain after the PH domain) with MEF2C and RXRB. Interacts (via the C-terminal domain after the PH domain) with PRKD1. In terms of tissue distribution, detected in mammary gland. Detected in heart (at protein level). Expressed as a 5.3 kb transcript in hematopoietic cells, skeletal muscle, lung, heart, estrogen-responsive reproductive tissues, including breast ductal epithelium. Also found in testis and breast cancer cell lines. Predominantly expressed as a 10 kb transcript in the heart and at lower levels in the lung, placenta, kidney, pancreas, skeletal muscle and liver. Transcripts of between 6-9 kb are also expressed in myeloid and lymphoid lineages, a variety of epithelial tissues, and in skeletal muscle.

The protein localises to the cytoplasm. It localises to the cytosol. It is found in the cell cortex. The protein resides in the nucleus. Its subcellular location is the membrane. In terms of biological role, scaffold protein that plays an important role in assembling signaling complexes downstream of several types of G protein-coupled receptors. Activates RHOA in response to signaling via G protein-coupled receptors via its function as Rho guanine nucleotide exchange factor. May also activate other Rho family members. Part of a kinase signaling complex that links ADRA1A and ADRA1B adrenergic receptor signaling to the activation of downstream p38 MAP kinases, such as MAPK11 and MAPK14. Part of a signaling complex that links ADRA1B signaling to the activation of RHOA and IKBKB/IKKB, leading to increased NF-kappa-B transcriptional activity. Part of a RHOA-dependent signaling cascade that mediates responses to lysophosphatidic acid (LPA), a signaling molecule that activates G-protein coupled receptors and potentiates transcriptional activation of the glucocorticoid receptor NR3C1. Part of a signaling cascade that stimulates MEF2C-dependent gene expression in response to lysophosphatidic acid (LPA). Part of a signaling pathway that activates MAPK11 and/or MAPK14 and leads to increased transcription activation of the estrogen receptors ESR1 and ESR2. Part of a signaling cascade that links cAMP and EGFR signaling to BRAF signaling and to PKA-mediated phosphorylation of KSR1, leading to the activation of downstream MAP kinases, such as MAPK1 or MAPK3. Functions as a scaffold protein that anchors cAMP-dependent protein kinase (PKA) and PRKD1. This promotes activation of PRKD1, leading to increased phosphorylation of HDAC5 and ultimately cardiomyocyte hypertrophy. Has no guanine nucleotide exchange activity on CDC42, Ras or Rac. Required for normal embryonic heart development, and in particular for normal sarcomere formation in the developing cardiomyocytes. Plays a role in cardiomyocyte growth and cardiac hypertrophy in response to activation of the beta-adrenergic receptor by phenylephrine or isoproterenol. Required for normal adaptive cardiac hypertrophy in response to pressure overload. Plays a role in osteogenesis. The protein is A-kinase anchor protein 13 (AKAP13) of Homo sapiens (Human).